Consider the following 363-residue polypeptide: MSPHFPALTPDQKKELADIAQRIVASGKGILAADESVGTMGKRLTQIGLENTDEHRRFYRQLLFTTDPSIKEHIGGIIFFHETMYQKTDGGVPFVKLVKDNGILVGIKVDKGVVPLAGTNGEGTTQGLDGLAERCAQYKKDGADFAKWRCVLKISPNTPSRLSIVENANVLARYATICQQNGLVPIVEPEILPDGDHDLKTCQYITEKVLAATYKALSDHHVYLEGTLLKPNMVTVGTAAPASTRPEQVAMATLTALRRTVPPAVPGITFLSGGQSEEDASIHLNAINKLHLIKPWALTFSYGRALQASVLKAWGGKKENLKAAQDELMRRAKINGQASKGEYKPTGTGAAAGESLFVANHAY.

Substrate contacts are provided by Arg-56 and Lys-147. Lys-230 serves as the catalytic Schiff-base intermediate with dihydroxyacetone-P.

This sequence belongs to the class I fructose-bisphosphate aldolase family. In terms of assembly, homotetramer. Expressed mainly in the skeletal muscle, heart muscle, brain, and some other tissues, but probably not in liver.

It catalyses the reaction beta-D-fructose 1,6-bisphosphate = D-glyceraldehyde 3-phosphate + dihydroxyacetone phosphate. It participates in carbohydrate degradation; glycolysis; D-glyceraldehyde 3-phosphate and glycerone phosphate from D-glucose: step 4/4. The chain is Fructose-bisphosphate aldolase, muscle type from Lethenteron camtschaticum (Japanese lamprey).